Reading from the N-terminus, the 149-residue chain is MNPIRMKKLESEIIRQISTAILEGKVKDPRVFLPSFHRIEISEDLKYAKVYFTALCNNNERKKLTQGLVSCAGFLSSFVGKNLRLHTNPKFTFVWDNSYIKSLEVNRLIDDSAPKTLFEELHPNPEEDDGDTDAETLLEDSESGIERET.

Residues 116 to 125 are compositionally biased toward basic and acidic residues; it reads TLFEELHPNP. The interval 116–149 is disordered; sequence TLFEELHPNPEEDDGDTDAETLLEDSESGIERET. Residues 126 to 143 are compositionally biased toward acidic residues; the sequence is EEDDGDTDAETLLEDSES.

Belongs to the RbfA family. In terms of assembly, monomer. Binds 30S ribosomal subunits, but not 50S ribosomal subunits or 70S ribosomes.

The protein resides in the cytoplasm. In terms of biological role, one of several proteins that assist in the late maturation steps of the functional core of the 30S ribosomal subunit. Associates with free 30S ribosomal subunits (but not with 30S subunits that are part of 70S ribosomes or polysomes). Required for efficient processing of 16S rRNA. May interact with the 5'-terminal helix region of 16S rRNA. This Leptospira biflexa serovar Patoc (strain Patoc 1 / Ames) protein is Ribosome-binding factor A.